A 259-amino-acid chain; its full sequence is Dihydroorotate dehydrogenase B (NAD(+)), electron transfer subunit (259 aa).

The 101-residue stretch at 3–103 folds into the FAD-binding FR-type domain; it reads KKQGRLTIVK…LGPLGQGFPL (101 aa). Residues 54–57, 71–73, and 78–79 each bind FAD; these read RPIS, IYR, and GT. Residues Cys222, Cys227, Cys230, and Cys246 each coordinate [2Fe-2S] cluster.

Belongs to the PyrK family. Heterotetramer of 2 PyrK and 2 PyrD type B subunits. [2Fe-2S] cluster is required as a cofactor. FAD serves as cofactor.

The protein operates within pyrimidine metabolism; UMP biosynthesis via de novo pathway; orotate from (S)-dihydroorotate (NAD(+) route): step 1/1. In terms of biological role, responsible for channeling the electrons from the oxidation of dihydroorotate from the FMN redox center in the PyrD type B subunit to the ultimate electron acceptor NAD(+). This is Dihydroorotate dehydrogenase B (NAD(+)), electron transfer subunit from Shouchella clausii (strain KSM-K16) (Alkalihalobacillus clausii).